The sequence spans 365 residues: uncharacterized protein (365 aa).

It belongs to the NAD(P)-dependent epimerase/dehydratase family.

It is found in the cytoplasm. The protein localises to the nucleus. This is an uncharacterized protein from Schizosaccharomyces pombe (strain 972 / ATCC 24843) (Fission yeast).